A 633-amino-acid polypeptide reads, in one-letter code: Extracellular metalloproteinase 3 (633 aa).

The first 18 residues, 1 to 18 (MHGLLLAGLLALPMNVLA), serve as a signal peptide directing secretion. Positions 19-246 (YPAEQHASNV…VHNVVDYVAS (228 aa)) are excised as a propeptide. N-linked (GlcNAc...) asparagine glycosylation is present at asparagine 410. Zn(2+) is bound at residue histidine 429. Residue glutamate 430 is part of the active site. Position 433 (histidine 433) interacts with Zn(2+). Residues asparagine 480 and asparagine 622 are each glycosylated (N-linked (GlcNAc...) asparagine).

The protein belongs to the peptidase M36 family. Zn(2+) serves as cofactor.

The protein resides in the secreted. Its function is as follows. Secreted metalloproteinase probably acting as a virulence factor. The sequence is that of Extracellular metalloproteinase 3 (MEP3) from Trichophyton rubrum (Athlete's foot fungus).